We begin with the raw amino-acid sequence, 161 residues long: MFNDIGALELVTLVVLAVLVFGPDKLPKVIQDVTRTIRKIREFSDSAKQDIRQELGPEFKDFEFEDLNPKTFIRKQLDNEELGLKEIRNGFDLKKEMAEVTDAVHGRDAESSSSGSSSGSSSAASGNGRVDMSKKPEKPEKPGKTDKPAADDRPPFDMDAT.

The helical transmembrane segment at 2–22 (FNDIGALELVTLVVLAVLVFG) threads the bilayer. Positions 102 to 161 (DAVHGRDAESSSSGSSSGSSSAASGNGRVDMSKKPEKPEKPGKTDKPAADDRPPFDMDAT) are disordered. Over residues 111 to 126 (SSSSGSSSGSSSAASG) the composition is skewed to low complexity. A compositionally biased stretch (basic and acidic residues) spans 131 to 161 (DMSKKPEKPEKPGKTDKPAADDRPPFDMDAT).

It belongs to the TatB family. The Tat system comprises two distinct complexes: a TatABC complex, containing multiple copies of TatA, TatB and TatC subunits, and a separate TatA complex, containing only TatA subunits. Substrates initially bind to the TatABC complex, which probably triggers association of the separate TatA complex to form the active translocon.

It localises to the cell membrane. Part of the twin-arginine translocation (Tat) system that transports large folded proteins containing a characteristic twin-arginine motif in their signal peptide across membranes. Together with TatC, TatB is part of a receptor directly interacting with Tat signal peptides. TatB may form an oligomeric binding site that transiently accommodates folded Tat precursor proteins before their translocation. The sequence is that of Sec-independent protein translocase protein TatB from Streptomyces coelicolor (strain ATCC BAA-471 / A3(2) / M145).